The primary structure comprises 39 residues: MTQQSNPNEQTVELNRTSLYWGLLLIFVLAVLFSNYFFN.

A helical membrane pass occupies residues 18–38; that stretch reads SLYWGLLLIFVLAVLFSNYFF.

It belongs to the PsbL family. PSII is composed of 1 copy each of membrane proteins PsbA, PsbB, PsbC, PsbD, PsbE, PsbF, PsbH, PsbI, PsbJ, PsbK, PsbL, PsbM, PsbT, PsbX, PsbY, PsbZ, Psb30/Ycf12, at least 3 peripheral proteins of the oxygen-evolving complex and a large number of cofactors. It forms dimeric complexes.

Its subcellular location is the plastid thylakoid membrane. One of the components of the core complex of photosystem II (PSII). PSII is a light-driven water:plastoquinone oxidoreductase that uses light energy to abstract electrons from H(2)O, generating O(2) and a proton gradient subsequently used for ATP formation. It consists of a core antenna complex that captures photons, and an electron transfer chain that converts photonic excitation into a charge separation. This subunit is found at the monomer-monomer interface and is required for correct PSII assembly and/or dimerization. The sequence is that of Photosystem II reaction center protein L from Cuscuta gronovii (Common dodder).